The chain runs to 1132 residues: Phosphatidylinositide phosphatase SAC2 (1132 aa).

An SAC domain is found at 167–518 (LKMFMDSESF…GDSISRQYAG (352 aa)). The segment at 250–269 (ESSDDDKSSPETPPQDSTCV) is disordered. Residues 593–760 (RSHQELISQL…KSSKPHEDII (168 aa)) enclose the hSac2 domain. Phosphoserine is present on residues Ser-714, Ser-827, and Ser-830. The interval 833-872 (TMENPGVMGNKVQGESDGDISSDNDSYHSDEFLTNSKSEE) is disordered. Positions 857–872 (DSYHSDEFLTNSKSEE) are enriched in basic and acidic residues. 4 positions are modified to phosphoserine: Ser-879, Ser-882, Ser-908, and Ser-911. Composition is skewed to polar residues over residues 908–918 (SASSIDVSTHA) and 994–1005 (RVSNEETQSEPM). Disordered regions lie at residues 908–951 (SASS…HTRT) and 981–1016 (VAQK…SQLN). The residue at position 1103 (Ser-1103) is a Phosphoserine.

In terms of assembly, homodimer. Interacts with OCRL and RAB5. Interacts with INPP5B and INPP4A. Interacts with STAT3; the interaction is independent of STAT3 'Tyr-705' phosphorylation status. Highly expressed in brain and hypothalamus, expressed in lung and pancreas, and detected at low levels in liver and heart (at protein level).

It localises to the membrane. The protein localises to the clathrin-coated pit. The protein resides in the early endosome. It is found in the recycling endosome. It catalyses the reaction a myo-inositol phosphate + H2O = myo-inositol + phosphate. Its function is as follows. Inositol 4-phosphatase which mainly acts on phosphatidylinositol 4-phosphate. May be functionally linked to OCRL, which converts phosphatidylinositol 4,5-bisphosphate to phosphatidylinositol, for a sequential dephosphorylation of phosphatidylinositol 4,5-bisphosphate at the 5 and 4 position of inositol, thus playing an important role in the endocytic recycling. Regulator of TF:TFRC and integrins recycling pathway, is also involved in cell migration mechanisms. Modulates AKT/GSK3B pathway by decreasing AKT and GSK3B phosphorylation. Negatively regulates STAT3 signaling pathway through inhibition of STAT3 phosphorylation and translocation to the nucleus. Functionally important modulator of cardiac myocyte size and of the cardiac response to stress. May play a role as negative regulator of axon regeneration after central nervous system injuries. The sequence is that of Phosphatidylinositide phosphatase SAC2 from Mus musculus (Mouse).